Consider the following 458-residue polypeptide: Sensor histidine kinase ZraS (458 aa).

The Cytoplasmic portion of the chain corresponds to M1–W14. Residues L15–I35 traverse the membrane as a helical segment. Residues R36–T194 are Periplasmic-facing. A helical membrane pass occupies residues L195–Y215. At R216 to G458 the chain is on the cytoplasmic side. Residues G244 to I451 form the Histidine kinase domain. Phosphohistidine; by autocatalysis is present on H247.

Autophosphorylated.

Its subcellular location is the cell inner membrane. The enzyme catalyses ATP + protein L-histidine = ADP + protein N-phospho-L-histidine.. With respect to regulation, activity of the ZraS/ZraR two-component system is repressed by the zinc-bound form of ZraP, which probably interacts with the periplasmic region of ZraS. In terms of biological role, part of the Zra signaling pathway, an envelope stress response (ESR) system composed of the periplasmic accessory protein ZraP, the histidine kinase ZraS and the transcriptional regulator ZraR. The ZraPSR system contributes to antibiotic resistance and is important for membrane integrity in the presence of membrane-targeting biocides. ZraS is a member of the two-component regulatory system ZraS/ZraR. Functions as a membrane-associated sensor kinase that phosphorylates ZraR in response to high concentrations of Zn(2+) or Pb(2+) in the medium. The polypeptide is Sensor histidine kinase ZraS (zraS) (Escherichia coli O157:H7).